Reading from the N-terminus, the 906-residue chain is Probable helicase HelY (906 aa).

Positions 26–184 (CSALERGHGV…WIQTVRGDTT (159 aa)) constitute a Helicase ATP-binding domain. Residue 39-46 (APTGAGKT) participates in ATP binding. A DEVH box motif is present at residues 132–135 (DEVH). The Helicase C-terminal domain occupies 259–463 (GRPEVIAKLD…SYNMTINLVH (205 aa)).

The protein belongs to the helicase family. SKI2 subfamily.

This Mycobacterium tuberculosis (strain CDC 1551 / Oshkosh) protein is Probable helicase HelY (helY).